A 363-amino-acid chain; its full sequence is Pyrimidine monooxygenase RutA (363 aa).

FMN contacts are provided by residues 49–50, Asn-115, Glu-124, 140–141, and Ser-190; these read IK and RY.

The protein belongs to the NtaA/SnaA/DszA monooxygenase family. RutA subfamily.

The catalysed reaction is uracil + FMNH2 + NADH + O2 = (Z)-3-ureidoacrylate + FMN + NAD(+) + H2O + H(+). It carries out the reaction thymine + FMNH2 + NADH + O2 = (Z)-2-methylureidoacrylate + FMN + NAD(+) + H2O + H(+). Its function is as follows. Catalyzes the pyrimidine ring opening between N-3 and C-4 by an unusual flavin hydroperoxide-catalyzed mechanism, adding oxygen atoms in the process to yield ureidoacrylate peracid, that immediately reacts with FMN forming ureidoacrylate and FMN-N(5)-oxide. The FMN-N(5)-oxide reacts spontaneously with NADH to produce FMN. Requires the flavin reductase RutF to regenerate FMN in vivo. This Enterobacter cloacae subsp. cloacae (strain ATCC 13047 / DSM 30054 / NBRC 13535 / NCTC 10005 / WDCM 00083 / NCDC 279-56) protein is Pyrimidine monooxygenase RutA.